Reading from the N-terminus, the 273-residue chain is Large ribosomal subunit protein uL2cz/uL2cy (273 aa).

Disordered regions lie at residues 1 to 23 and 223 to 273; these read MAIH…SQVK and NPVD…RRSK.

The protein belongs to the universal ribosomal protein uL2 family. Part of the 50S ribosomal subunit.

It is found in the plastid. Its subcellular location is the chloroplast. This is Large ribosomal subunit protein uL2cz/uL2cy (rpl2-A) from Oenothera argillicola (Appalachian evening primrose).